Here is a 532-residue protein sequence, read N- to C-terminus: MKNGSISPVVLIILDGWGYREEKYGNAIAVGKTPNIDSLWQAYPRTLIQASGKAVGLPEGQMGNSEVGHLNIGAGRVVPQELVRISDAIEDGLIVQNQAIKKICQDVIERNSKLHLVGLCSSGGVHSHVNHLLGLLDVAKAKGISDVCVHAITDGRDTNPKSGLHVLKQIEYHTNQIGIGRIATVSGRYYAMDRDKRWDRIQKAYEVMTQDGYGTGCSASDLLQKSYAEGITDEFVLPVRVAPGAVEPGDGVIFFNFRPDRARQLTQAFVAPDFNGFERQTIQPLTFLTFTQYDSSFPVLVAFEPQNFNNILGQVISQHGLRQFRTAETEKYAHVTYFFNGGLEQPFEGEDRELVQSPMVSHYDEAPEMSAEDLTEVAIAAVKKQIYSLIVINYANPDMVGHTGAMDAAVNAVQTVDHCLGKLLQGISKVGGTAIIIADHGNAEYMWDEDGNPWTAHTTNLVPFILIEGEVSKIPGHGTKVPLRENGCLADIAPTILEILNLPQPAEMTGKSIIKKAEYELKPNRTPVRVGL.

2 residues coordinate Mn(2+): Asp15 and Ser65. Catalysis depends on Ser65, which acts as the Phosphoserine intermediate. Residues His126, 156–157 (RD), Arg188, Arg194, 258–261 (RPDR), and Lys331 contribute to the substrate site. Residues Asp398, His402, Asp439, His440, and His457 each coordinate Mn(2+).

This sequence belongs to the BPG-independent phosphoglycerate mutase family. As to quaternary structure, monomer. The cofactor is Mn(2+).

The catalysed reaction is (2R)-2-phosphoglycerate = (2R)-3-phosphoglycerate. It functions in the pathway carbohydrate degradation; glycolysis; pyruvate from D-glyceraldehyde 3-phosphate: step 3/5. Functionally, catalyzes the interconversion of 2-phosphoglycerate and 3-phosphoglycerate. The protein is 2,3-bisphosphoglycerate-independent phosphoglycerate mutase of Trichodesmium erythraeum (strain IMS101).